The primary structure comprises 123 residues: Ribosome-binding factor A (123 aa).

The protein belongs to the RbfA family. Monomer. Binds 30S ribosomal subunits, but not 50S ribosomal subunits or 70S ribosomes.

It localises to the cytoplasm. Its function is as follows. One of several proteins that assist in the late maturation steps of the functional core of the 30S ribosomal subunit. Associates with free 30S ribosomal subunits (but not with 30S subunits that are part of 70S ribosomes or polysomes). Required for efficient processing of 16S rRNA. May interact with the 5'-terminal helix region of 16S rRNA. This is Ribosome-binding factor A from Neisseria meningitidis serogroup B (strain ATCC BAA-335 / MC58).